The sequence spans 77 residues: Small ribosomal subunit protein bS18 (77 aa).

It belongs to the bacterial ribosomal protein bS18 family. Part of the 30S ribosomal subunit. Forms a tight heterodimer with protein bS6.

Functionally, binds as a heterodimer with protein bS6 to the central domain of the 16S rRNA, where it helps stabilize the platform of the 30S subunit. The polypeptide is Small ribosomal subunit protein bS18 (Shouchella clausii (strain KSM-K16) (Alkalihalobacillus clausii)).